The primary structure comprises 123 residues: Small ribosomal subunit protein uS13 (123 aa).

It belongs to the universal ribosomal protein uS13 family. As to quaternary structure, part of the 30S ribosomal subunit. Forms a loose heterodimer with protein S19. Forms two bridges to the 50S subunit in the 70S ribosome.

Functionally, located at the top of the head of the 30S subunit, it contacts several helices of the 16S rRNA. In the 70S ribosome it contacts the 23S rRNA (bridge B1a) and protein L5 of the 50S subunit (bridge B1b), connecting the 2 subunits; these bridges are implicated in subunit movement. Contacts the tRNAs in the A and P-sites. The protein is Small ribosomal subunit protein uS13 of Neorickettsia sennetsu (strain ATCC VR-367 / Miyayama) (Ehrlichia sennetsu).